An 859-amino-acid polypeptide reads, in one-letter code: Catenin delta-1 (859 aa).

Residues 15–44 (SVRAQEAQFELLSRALEEERRHVTAQLDRV) are a coiled coil. Positions 226–254 (IDGPDYATTGRRGANGGDPRRRLRSYEDP) are disordered. Positions 243-254 (DPRRRLRSYEDP) are enriched in basic and acidic residues. ARM repeat units lie at residues 279 to 317 (APNS…HLSY), 320 to 359 (EDVK…NLSY), 363 to 401 (RENK…VTGT), 402 to 446 (LWNL…RVEG), 464 to 503 (LRNI…LVDS), 513 to 552 (LRNI…VRRG), 574 to 614 (AQGY…NLCA), 621 to 660 (RCIR…NLCG), 661 to 700 (DNRN…CVIN), and 701 to 746 (TIHE…GFCL).

This sequence belongs to the beta-catenin family. As to quaternary structure, interacts with C-cadherin and with zbtb33. As to expression, ubiquitously expressed.

The protein localises to the cell junction. It localises to the adherens junction. Its subcellular location is the cytoplasm. It is found in the nucleus. The protein resides in the cell membrane. Key regulator of cell-cell adhesion that associates with and regulates the cell adhesion properties of both C-, E- and N-cadherins, being critical for their surface stability. Beside cell-cell adhesion, regulates gene transcription through several transcription factors including ZBTB33/Kaiso2 and GLIS2, and the activity of Rho family GTPases and downstream cytoskeletal dynamics. Implicated both in cell transformation by SRC and in ligand-induced receptor signaling through the EGF, PDGF, CSF-1 and ERBB2 receptors. Required for gastrulation, axial elongation and development of the craniofacial skeleton and eye. This is Catenin delta-1 (ctnnd1) from Xenopus laevis (African clawed frog).